We begin with the raw amino-acid sequence, 234 residues long: Thrombin-like enzyme contortrixobin (234 aa).

The Peptidase S1 domain maps to 1-225 (VVGGDECNIN…YNDWIQSIIA (225 aa)). 6 disulfide bridges follow: Cys-7–Cys-139, Cys-26–Cys-42, Cys-74–Cys-232, Cys-118–Cys-186, Cys-150–Cys-165, and Cys-176–Cys-201. Residues His-41 and Asp-86 each act as charge relay system in the active site. Catalysis depends on Ser-180, which acts as the Charge relay system.

Monomer. Post-translationally, not glycosylated. As to expression, expressed by the venom gland.

Its subcellular location is the secreted. Its activity is regulated as follows. Strongly inhibited by diisopropylfluorophosphate (DFP) and to a lesser extent by PMSF, benzamidine and 4,6-diamidino-2-phenylindole. Low inhibition by hirudin. Thrombin-like snake venom serine protease that cleaves beta chain of fibrinogen (FGB), releasing fibrinopeptide B. Has a coagulant activity activating blood coagulation factors V (F5) and XIII (F13A1). The sequence is that of Thrombin-like enzyme contortrixobin from Agkistrodon contortrix contortrix (Southern copperhead).